Here is a 1541-residue protein sequence, read N- to C-terminus: Multiple epidermal growth factor-like domains protein 6 (1541 aa).

An N-terminal signal peptide occupies residues 1 to 30; sequence MSFLEEARAAGRAVVLALVLLLLPAVPVGA. Positions 44 to 125 constitute an EMI domain; the sequence is MPHVCAEQEL…QQPDEEGCLS (82 aa). Disulfide bonds link Cys48-Cys111, Cys77-Cys83, Cys110-Cys123, Cys128-Cys139, Cys133-Cys147, Cys149-Cys158, Cys165-Cys176, Cys172-Cys185, Cys187-Cys200, Cys242-Cys255, Cys248-Cys268, Cys270-Cys283, Cys289-Cys300, Cys296-Cys309, and Cys311-Cys324. An EGF-like 1 domain is found at 124–159; the sequence is LSAECSASLCFHGGRCVPGSAQPCHCPPGFQGPRCQ. In terms of domain architecture, EGF-like 2; calcium-binding spans 161 to 201; sequence DVDECRTHNGGCQHRCVNTPGSYLCECKPGFRLHTDSRTCL. 2 consecutive EGF-like domains span residues 206–242 and 238–284; these read CALG…GRHC and DGRH…KACE. Asn252 is a glycosylation site (N-linked (GlcNAc...) asparagine). The EGF-like 5; calcium-binding domain occupies 285 to 325; it reads DVDECAAGLAQCAHGCLNTQGSFKCVCHAGYELGADGRQCY. 2 EGF-like domains span residues 335-370 and 375-411; these read CEAN…QRTC and DCAD…CGCE. The 41-residue stretch at 412–452 folds into the EGF-like 8; calcium-binding domain; the sequence is DVDECASSRGGCEHHCTNLAGSFQCSCEAGYRLHEDRRGCS. 12 disulfides stabilise this stretch: Cys416/Cys427, Cys423/Cys436, Cys438/Cys451, Cys520/Cys533, Cys527/Cys540, Cys542/Cys551, Cys564/Cys576, Cys570/Cys583, Cys585/Cys594, Cys607/Cys619, Cys613/Cys626, and Cys628/Cys637. EGF-like domains follow at residues 516-552, 560-595, 603-638, 736-770, 783-814, 822-857, 865-901, 909-944, 955-987, 995-1030, 1038-1073, 1081-1116, 1124-1159, 1211-1246, 1254-1289, 1297-1332, 1345-1375, 1383-1418, and 1469-1504; these read FGHD…LICN, FGKN…TNCE, YGKH…RFCH, FGVN…EDCE, QEIC…SRCQ, YGPS…FSCQ, WGPD…PRCE, FGPG…TFCE, DCRS…PRCA, YGHN…PSCL, YGDN…LACE, VRAG…DKCQ, FGEA…SGCE, YGPG…TDCN, FGPN…VRCE, FGVG…RHCE, HLEC…QACE, HGAG…HFCE, and FGPS…PTCR. Asn739 carries N-linked (GlcNAc...) asparagine glycosylation. Intrachain disulfides connect Cys740–Cys751, Cys744–Cys758, Cys760–Cys769, Cys786–Cys795, Cys789–Cys802, Cys804–Cys813, Cys826–Cys838, Cys832–Cys845, Cys847–Cys856, Cys869–Cys882, Cys873–Cys889, Cys891–Cys900, Cys913–Cys925, Cys919–Cys932, and Cys934–Cys943. Disulfide bonds link Cys999/Cys1011, Cys1005/Cys1018, Cys1020/Cys1029, Cys1042/Cys1054, Cys1048/Cys1061, Cys1063/Cys1072, Cys1085/Cys1097, Cys1091/Cys1104, Cys1106/Cys1115, Cys1128/Cys1140, Cys1134/Cys1147, Cys1149/Cys1158, Cys1215/Cys1227, Cys1221/Cys1234, Cys1236/Cys1245, Cys1258/Cys1270, Cys1264/Cys1277, Cys1279/Cys1288, Cys1301/Cys1313, Cys1307/Cys1320, Cys1322/Cys1331, Cys1348/Cys1356, Cys1350/Cys1363, Cys1365/Cys1374, Cys1387/Cys1399, Cys1393/Cys1406, Cys1408/Cys1417, Cys1473/Cys1485, Cys1479/Cys1492, and Cys1494/Cys1503. The tract at residues 1509-1541 is disordered; sequence LRLPENPSLAQGSAGTLPASSRPTSRSGGPARH. Polar residues predominate over residues 1516 to 1535; that stretch reads SLAQGSAGTLPASSRPTSRS.

The protein localises to the secreted. The polypeptide is Multiple epidermal growth factor-like domains protein 6 (MEGF6) (Homo sapiens (Human)).